Here is a 412-residue protein sequence, read N- to C-terminus: Carboxypeptidase B1 (412 aa).

A signal peptide spans 1 to 18 (MIPRIVVVLLSVLAVVTA). Positions 19 to 75 (RRSYEGYKVYGIVPESPDEAEILYQIRQSNPDLDFWHLTKQPGDEARVLVAPKDQRS) are cleaved as a propeptide — activation peptide. The region spanning 118–408 (SYLRHNEINE…VGIKAMALKV (291 aa)) is the Peptidase M14 domain. Residues histidine 175 and glutamate 178 each contribute to the Zn(2+) site. 175–178 (HARE) contributes to the a peptide binding site. Asparagine 205 carries an N-linked (GlcNAc...) asparagine glycan. A peptide-binding positions include arginine 230 and 246 to 247 (NR). The cysteines at positions 240 and 263 are disulfide-linked. Histidine 299 contributes to the Zn(2+) binding site. A peptide is bound by residues 300–301 (SY) and tyrosine 351. The active-site Proton donor/acceptor is the glutamate 374. Residue asparagine 395 is glycosylated (N-linked (GlcNAc...) asparagine).

This sequence belongs to the peptidase M14 family. Monomer. Interacts with Dengue virus type 2 (DENV2, MY89-88549 strain) envelope protein E. Interacts with Dengue virus envelope protein E type 3, type 2, type 4 and type 1 with decreasing strength. It depends on Zn(2+) as a cofactor. Expressed in midgut (at protein level).

Its subcellular location is the endoplasmic reticulum. The enzyme catalyses Preferential release of a C-terminal lysine or arginine amino acid.. Its activity is regulated as follows. Inhibited by S.tuberosum metallocarboxypeptidase inhibitor. Carboxypeptidase that preferentially hydrolyzes arginine and lysine residues at the C-terminus. During infection by dengue virus, may play a role in preventing viral packaging, maturation, and release from the midgut. In Aedes aegypti (Yellowfever mosquito), this protein is Carboxypeptidase B1.